A 318-amino-acid chain; its full sequence is MKKMNYLLPEESGEMTLSGITTLRKIEQKLRNLFESQNYQEVMPPNFEYVELYTGLDAGFEQEKMFQFINHEGKSIALRYDFTVPLARNFALSELTEARYSYFGKVFRKEKRHKGRRTESYQVGTELLGLSEVTGDQEILGLTFMSLEALTLKNTIVEIGSAAFYKRLCELSGGDAQLFSELLEKKSLSGMKAFVDKHEMIGAPRDLLLALMTTTDLPTMKKLVLATGDEKLSQALEMLEALNLPDKTAICQIHYDFAMVPAMGYYTGLMFQVYVEGVAQATISGGRYDKLLKQFGKTTGSIGFCVHMDNVVKGLNND.

The protein belongs to the class-II aminoacyl-tRNA synthetase family. HisZ subfamily. Heteromultimer composed of HisG and HisZ subunits.

Its subcellular location is the cytoplasm. The protein operates within amino-acid biosynthesis; L-histidine biosynthesis; L-histidine from 5-phospho-alpha-D-ribose 1-diphosphate: step 1/9. Functionally, required for the first step of histidine biosynthesis. May allow the feedback regulation of ATP phosphoribosyltransferase activity by histidine. This chain is ATP phosphoribosyltransferase regulatory subunit, found in Lactococcus lactis subsp. cremoris (strain MG1363).